Reading from the N-terminus, the 146-residue chain is Leghemoglobin (146 aa).

The Globin domain maps to 3-146 (AFTEKQEALV…FAAGIKKAYA (144 aa)). 2 positions are modified to nitrated tyrosine: Tyr-26 and Tyr-31. A heme b-binding site is contributed by Ser-46. Ser-46 carries the post-translational modification Phosphoserine. His-62 contacts O2. Heme b-binding residues include His-93 and Lys-96. The residue at position 134 (Tyr-134) is a Nitrated tyrosine.

This sequence belongs to the plant globin family. Monomer. Nitrated mainly at Tyr-31 and, to a lower extent, at Tyr-26 and Tyr-134, in effective nodules and particularly in hypoxic conditions; this mechanism may play a protective role in the symbiosis by buffering toxic peroxynitrite NO(2)(-). Nitration level decrease during nodule senescence. In terms of processing, phosphorylation at Ser-46 disrupts the molecular environment of its porphyrin ring oxygen binding pocket, thus leading to a reduced oxygen consumption and to the delivery of oxygen O(2) to symbiosomes. Root nodules.

It localises to the cytoplasm. The protein resides in the cytosol. The protein localises to the nucleus. Functionally, leghemoglobin that reversibly binds oxygen O(2) through a pentacoordinated heme iron. In root nodules, facilitates the diffusion of oxygen to the bacteroids while preventing the bacterial nitrogenase from being inactivated by buffering dioxygen, nitric oxide and carbon monoxide, and promoting the formation of reactive oxygen species (ROS, e.g. H(2)O(2)). This role is essential for symbiotic nitrogen fixation (SNF). The protein is Leghemoglobin of Phaseolus vulgaris (Kidney bean).